The sequence spans 86 residues: Ferredoxin YfhL (86 aa).

2 4Fe-4S ferredoxin-type domains span residues 1–29 (MALL…MGDH) and 31–65 (YEIN…KDPA). Residues Cys9, Cys12, Cys15, Cys19, Cys38, Cys41, Cys50, and Cys54 each coordinate [4Fe-4S] cluster.

[4Fe-4S] cluster serves as cofactor.

Ferredoxins are iron-sulfur proteins that transfer electrons in a wide variety of metabolic reactions. The sequence is that of Ferredoxin YfhL (yfhL) from Escherichia coli (strain K12).